The primary structure comprises 95 residues: Small ubiquitin-related modifier 2-B (95 aa).

A Glycyl lysine isopeptide (Lys-Gly) (interchain with G-Cter in SUMO) cross-link involves residue lysine 11. Positions 16–95 constitute a Ubiquitin-like domain; that stretch reads DHINLKVAGQ…VFQQQTGGSY (80 aa). A Glycyl lysine isopeptide (Gly-Lys) (interchain with K-? in acceptor proteins) cross-link involves residue glycine 93. Residues 94 to 95 constitute a propeptide that is removed on maturation; the sequence is SY.

Belongs to the ubiquitin family. SUMO subfamily. Interacts with sae2 and ube2i. Covalently attached to a number of proteins, including top2. In terms of processing, polymeric chains can be formed through Lys-11 cross-linking. Cleavage of precursor form by a sentrin-specific protease is necessary for function.

The protein localises to the nucleus. Its function is as follows. Ubiquitin-like protein that can be covalently attached to proteins as a monomer or as a lysine-linked polymer. Covalent attachment via an isopeptide bond to its substrates requires prior activation by the E1 complex sae1-sae2 and linkage to the E2 enzyme ube2i, and can be promoted by an E3 ligase such as pias1-4. This post-translational modification on lysine residues of proteins plays a crucial role in a number of cellular processes such as nuclear transport, DNA replication and repair, mitosis and signal transduction. Polymeric sumo2 chains are also susceptible to polyubiquitination which functions as a signal for proteasomal degradation of modified proteins. This Xenopus laevis (African clawed frog) protein is Small ubiquitin-related modifier 2-B (sumo2-b).